Here is a 267-residue protein sequence, read N- to C-terminus: Tryptophan synthase alpha chain (267 aa).

Catalysis depends on proton acceptor residues glutamate 47 and aspartate 58.

The protein belongs to the TrpA family. In terms of assembly, tetramer of two alpha and two beta chains.

The catalysed reaction is (1S,2R)-1-C-(indol-3-yl)glycerol 3-phosphate + L-serine = D-glyceraldehyde 3-phosphate + L-tryptophan + H2O. It participates in amino-acid biosynthesis; L-tryptophan biosynthesis; L-tryptophan from chorismate: step 5/5. Functionally, the alpha subunit is responsible for the aldol cleavage of indoleglycerol phosphate to indole and glyceraldehyde 3-phosphate. This chain is Tryptophan synthase alpha chain, found in Chlorobium chlorochromatii (strain CaD3).